We begin with the raw amino-acid sequence, 499 residues long: RNA polymerase sigma factor SigA (499 aa).

2 stretches are compositionally biased toward basic residues: residues 1-12 (MSSPKKNFKKPQ) and 77-87 (KKRRGRKPKHA). Disordered stretches follow at residues 1-25 (MSSP…LNEE) and 68-89 (QENK…HAPL). Positions 252–322 (LVTSNLRLVV…TRAIADQART (71 aa)) are sigma-70 factor domain-2. Positions 276–279 (DLIQ) match the Interaction with polymerase core subunit RpoC motif. Residues 331–412 (ETINRLAKAE…DTDAQMPDEF (82 aa)) form a sigma-70 factor domain-3 region. A sigma-70 factor domain-4 region spans residues 425–480 (LLNNCLSEQEELIVRMRIGMPPYNETKTLDEVSQKIKIPREKIRQIETKAIRKLRQ). Residues 453-472 (LDEVSQKIKIPREKIRQIET) constitute a DNA-binding region (H-T-H motif).

Belongs to the sigma-70 factor family. RpoD/SigA subfamily. In terms of assembly, interacts transiently with the RNA polymerase catalytic core.

The protein resides in the cytoplasm. In terms of biological role, sigma factors are initiation factors that promote the attachment of RNA polymerase to specific initiation sites and are then released. This sigma factor is the primary sigma factor during exponential growth. This Mycoplasma pneumoniae (strain ATCC 29342 / M129 / Subtype 1) (Mycoplasmoides pneumoniae) protein is RNA polymerase sigma factor SigA.